Reading from the N-terminus, the 225-residue chain is 3-dehydroquinate dehydratase (225 aa).

Residues Ser6, 30–32 (EWR), and Arg62 contribute to the 3-dehydroquinate site. The active-site Proton donor/acceptor is the His118. Residue Lys143 is the Schiff-base intermediate with substrate of the active site. 3 residues coordinate 3-dehydroquinate: Arg186, Ser205, and Gln209.

The protein belongs to the type-I 3-dehydroquinase family. Homodimer.

It catalyses the reaction 3-dehydroquinate = 3-dehydroshikimate + H2O. It participates in metabolic intermediate biosynthesis; chorismate biosynthesis; chorismate from D-erythrose 4-phosphate and phosphoenolpyruvate: step 3/7. Involved in the third step of the chorismate pathway, which leads to the biosynthesis of aromatic amino acids. Catalyzes the cis-dehydration of 3-dehydroquinate (DHQ) and introduces the first double bond of the aromatic ring to yield 3-dehydroshikimate. This is 3-dehydroquinate dehydratase from Streptococcus sanguinis (strain SK36).